Here is a 410-residue protein sequence, read N- to C-terminus: LanC-like protein GCR2 (410 aa).

Positions 283, 328, and 329 each coordinate Zn(2+).

It belongs to the LanC-like protein family. May interact (via C-terminus) with GPA1.

May play a role in abscisic acid (ABA) signaling. This chain is LanC-like protein GCR2 (GCR2), found in Arabidopsis thaliana (Mouse-ear cress).